We begin with the raw amino-acid sequence, 1580 residues long: MEAQSHSSTTTEKKKVENSIVKCSTRTDVSEKAVASSTTSNEDESPGQTYHRERRNAITMQPQNVQGLSKVSEEPSTSSDERASLIKKEIHGSLPHVAEPSVPYRGTVFAMDPRNGYMEPHYHPPHLFPAFHPPVPIDARHHEGRYHYDPSPIPPLHMTSALSSSPTYPDLPFIRISPHRNPAAASESPFSPPHPYINPYMDYIRSLHSSPSLSMISATRGLSPTDAPHAGVSPAEYYHQMALLTGQRSPYADIIPSAATAGTGAIHMEYLHAMDSTRFPSPRLSARPSRKRTLSISPLSDHSFDLQTMIRTSPNSLVTILNNSRSSSSASGSYGHLSASAISPALSFTYSSAPVSLHMHQQILSRQQSLGSAFGHSPPLIHPAPTFPTQRPIPGIPTVLNPVQVSSGPSESSQNKPTSESAVSSTGDPMHNKRSKIKPDEDLPSPGARGQQEQPEGTTLVKEEGDKDESKQEPEVIYETNCHWEGCAREFDTQEQLVHHINNDHIHGEKKEFVCRWLDCSREQKPFKAQYMLVVHMRRHTGEKPHKCTFEGCTKAYSRLENLKTHLRSHTGEKPYVCEHEGCNKAFSNASDRAKHQNRTHSNEKPYVCKIPGCTKRYTDPSSLRKHVKTVHGPEAHVTKKQRGDIHPRPPPPRDSGSHSQSRSPGRPTQGALGEQQDLSNTTSKREECLQVKTVKAEKPMTSQPSPGGQSSCSSQQSPISNYSNSGLELPLTDGGSIGDLSAIDETPIMDSTISTATTALALQARRNPAGTKWMEHVKLERLKQVNGMFPRLNPILPPKAPAVSPLIGNGTQSNNTCSLGGPMTLLPGRSDLSGVDVTMLNMLNRRDSSASTISSAYLSSRRSSGISPCFSSRRSSEASQAEGRPQNVSVADSYDPISTDASRRSSEASQSDGLPSLLSLTPAQQYRLKAKYAAATGGPPPTPLPNMERMSLKTRLALLGDALEPGVALPPVHAPRRCSDGGAHGYGRRHLQPHDAPGHGVRRASDPVRTGSEGLALPRVPRFSSLSSCNPPAMATSAEKRSLVLQNYTRPEGGQSRNFHSSPCPPSITENVTLESLTMDADANLNDEDFLPDDVVQYLNSQNQAGYEQHFPSTLPDDSKVPHGPGDFDAPGLPDSHAGQQFHALEQPCPEGSKTDLPIQWNEVSSGSADLSSSKLKCGPRPAVPQTRAFGFCNGMVVHPQNPLRSGPAGGYQTLGENSNPYGGPEHLMLHNSPGSGTSGNAFHEQPCKAPQYGNCLNRQPVAPGALDGACGAGIQASKLKSTPMQGSGGQLNFGLPVAPNESAGSMVNGMQNQDPVGQGYLAHQLLGDSMQHPGAGRPGQQMLGQISATSHINIYQGPESCLPGAHGMGSQPSSLAVVRGYQPCASFGGSRRQAMPRDSLALQSGQLSDTSQTCRVNGIKMEMKGQPHPLCSNLQNYSGQFYDQTVGFSQQDTKAGSFSISDASCLLQGTSAKNSELLSPGANQVTSTVDSLDSHDLEGVQIDFDAIIDDGDHSSLMSGALSPSIIQNLSYSSSRLTTPRASLPFPALSMSTTNMAIGDMSSLLTSLAEESKFLAVMQ.

Met-1 is subject to N-acetylmethionine. 2 stretches are compositionally biased toward polar residues: residues 1–10 (MEAQSHSSTT) and 58–78 (ITMQ…PSTS). The interval 1–79 (MEAQSHSSTT…KVSEEPSTSS (79 aa)) is disordered. The residue at position 175 (Arg-175) is an Omega-N-methylarginine. Residues 368–475 (QSLGSAFGHS…DKDESKQEPE (108 aa)) form a disordered region. Residues 401 to 427 (NPVQVSSGPSESSQNKPTSESAVSSTG) are compositionally biased toward polar residues. Residues Lys-438 and Lys-462 each participate in a glycyl lysine isopeptide (Lys-Gly) (interchain with G-Cter in SUMO2) cross-link. Basic and acidic residues predominate over residues 461–474 (VKEEGDKDESKQEP). 5 C2H2-type zinc fingers span residues 480–505 (TNCH…NNDH), 513–540 (FVCR…MRRH), 546–570 (HKCT…LRSH), 576–601 (YVCE…NRTH), and 607–632 (YVCK…KTVH). The disordered stretch occupies residues 620–728 (DPSSLRKHVK…PISNYSNSGL (109 aa)). Residues 632–648 (HGPEAHVTKKQRGDIHP) are compositionally biased toward basic and acidic residues. Ser-664 is subject to Phosphoserine. Residues 684–699 (SKREECLQVKTVKAEK) are compositionally biased toward basic and acidic residues. Low complexity predominate over residues 703–726 (SQPSPGGQSSCSSQQSPISNYSNS). Residues 745 to 845 (DETPIMDSTI…VDVTMLNMLN (101 aa)) form a mediates interaction with DZIP1 region. Residue Lys-773 forms a Glycyl lysine isopeptide (Lys-Gly) (interchain with G-Cter in ubiquitin) linkage. Residue Lys-779 forms a Glycyl lysine isopeptide (Lys-Gly) (interchain with G-Cter in SUMO2); alternate linkage. Residue Lys-779 forms a Glycyl lysine isopeptide (Lys-Gly) (interchain with G-Cter in ubiquitin); alternate linkage. Glycyl lysine isopeptide (Lys-Gly) (interchain with G-Cter in ubiquitin) cross-links involve residues Lys-784 and Lys-800. Residues Ser-849, Ser-865, Ser-877, and Ser-907 each carry the phosphoserine; by PKA modification. The segment covering 863–882 (RSSGISPCFSSRRSSEASQA) has biased composition (low complexity). Residues 863–918 (RSSGISPCFSSRRSSEASQAEGRPQNVSVADSYDPISTDASRRSSEASQSDGLPSL) form a disordered region. Polar residues predominate over residues 908–918 (EASQSDGLPSL). 2 positions are modified to phosphoserine; by PKA: Ser-980 and Ser-1006. The disordered stretch occupies residues 981–1042 (DGGAHGYGRR…PAMATSAEKR (62 aa)).

The protein belongs to the GLI C2H2-type zinc-finger protein family. As to quaternary structure, the full-length GLI3 form (GLI3FL) interacts with SUFU and this interaction regulates the formation of either repressor or activator forms of GLI3. Its association with SUFU is regulated by Hh signaling and dissociation of the SUFU-GLI3 interaction requires the presence of the ciliary motor KIF3A. Interacts with KIF7. The activator form of GLI3 (GLI3A) but not the repressor form (GLI3R) can interact with TRPS1. The phosphorylated form interacts with BTRC. Interacts with ZIC1. Interacts with ZIC3 (via C2H2-type domains 3, 4 and 5); the interaction enhances its transcriptional activity. Interacts with WRD11; the interaction associates EMX1 with GLI3. Interacts with DZIP1; retains GLI3 within the cytoplasm. Phosphorylated on multiple sites by protein kinase A (PKA) and phosphorylation by PKA primes further phosphorylation by CK1 and GSK3. Phosphorylated by DYRK2 (in vitro). Phosphorylation is essential for its proteolytic processing. Post-translationally, transcriptional repressor GLI3R, a C-terminally truncated form, is generated from the full-length GLI3 protein (GLI3FL/GLI3-190) through proteolytic processing. This process requires PKA-primed phosphorylation of GLI3, ubiquitination of GLI3 and the presence of BTRC. GLI3FL is complexed with SUFU in the cytoplasm and is maintained in a neutral state. Without the Hh signal, the SUFU-GLI3 complex is recruited to cilia, leading to the efficient processing of GLI3FL into GLI3R. GLI3R formation leads to its dissociation from SUFU, allowing it to translocate into the nucleus, and repress Hh target genes. When Hh signaling is initiated, SUFU dissociates from GLI3FL and this has two consequences. First, GLI3R production is halted. Second, free GLI3FL translocates to the nucleus, where it is phosphorylated, destabilized, and converted to a transcriptional activator (GLI3A). Phosphorylated in vitro by ULK3.

The protein resides in the nucleus. The protein localises to the cytoplasm. It is found in the cell projection. It localises to the cilium. In terms of biological role, has a dual function as a transcriptional activator and a repressor of the sonic hedgehog (Shh) pathway, and plays a role in limb development. The full-length GLI3 form (GLI3FL) after phosphorylation and nuclear translocation, acts as an activator (GLI3A) while GLI3R, its C-terminally truncated form, acts as a repressor. A proper balance between the GLI3 activator and the repressor GLI3R, rather than the repressor gradient itself or the activator/repressor ratio gradient, specifies limb digit number and identity. In concert with TRPS1, plays a role in regulating the size of the zone of distal chondrocytes, in restricting the zone of PTHLH expression in distal cells and in activating chondrocyte proliferation. Binds to the minimal GLI-consensus sequence 5'-GGGTGGTC-3'. Plays a role in limb and brain development. This is Transcriptional activator GLI3 (GLI3) from Pan troglodytes (Chimpanzee).